A 287-amino-acid chain; its full sequence is Shikimate dehydrogenase (NADP(+)) (287 aa).

Residues 20–22 (SRS) and Thr67 each bind shikimate. Residue Lys71 is the Proton acceptor of the active site. Position 84 (Glu84) interacts with NADP(+). 2 residues coordinate shikimate: Asn93 and Asp108. Residues 132 to 136 (GAGGA) and Met226 each bind NADP(+). Tyr228 is a binding site for shikimate. Gly250 provides a ligand contact to NADP(+).

Belongs to the shikimate dehydrogenase family. As to quaternary structure, homodimer.

It carries out the reaction shikimate + NADP(+) = 3-dehydroshikimate + NADPH + H(+). It participates in metabolic intermediate biosynthesis; chorismate biosynthesis; chorismate from D-erythrose 4-phosphate and phosphoenolpyruvate: step 4/7. Functionally, involved in the biosynthesis of the chorismate, which leads to the biosynthesis of aromatic amino acids. Catalyzes the reversible NADPH linked reduction of 3-dehydroshikimate (DHSA) to yield shikimate (SA). This is Shikimate dehydrogenase (NADP(+)) from Bordetella petrii (strain ATCC BAA-461 / DSM 12804 / CCUG 43448).